An 847-amino-acid chain; its full sequence is Mitogen-activated protein kinase kinase kinase 11 (847 aa).

The residue at position 11 (Ser-11) is a Phosphoserine. The segment at 11–38 (SPLGSWNGSGSGGGGGGGGGRPEGSPKA) is disordered. Residues 17 to 32 (NGSGSGGGGGGGGGRP) are compositionally biased toward gly residues. Phosphoserine is present on Ser-35. An SH3 domain is found at 41-105 (YANPVWTALF…PSNYVSRGGG (65 aa)). One can recognise a Protein kinase domain in the interval 117-379 (LRLEEVIGIG…ASILQQLEAL (263 aa)). Residues 123 to 131 (IGIGGFGKV) and Lys-144 contribute to the ATP site. Residue Asp-241 is the Proton acceptor of the active site. Position 277 is a phosphothreonine; by autocatalysis (Thr-277). Residue Ser-281 is modified to Phosphoserine; by autocatalysis and MAP4K1. Ser-394 is modified (phosphoserine). 2 leucine-zipper regions span residues 403–424 (IQGLFDELRAKEKELLSREEEL) and 438–459 (LRRREHLLAQWELEVFERELTL). Residues Ser-507, Ser-524, Ser-548, Ser-555, and Ser-556 each carry the phosphoserine modification. The segment at 537 to 643 (PAEPGQAWGR…SSGTPKLIQR (107 aa)) is disordered. Basic and acidic residues predominate over residues 550 to 562 (RRLEDSSNGERRA). Low complexity predominate over residues 597-609 (SSPLGSPSTPPAL). Residues Ser-654, Ser-693, and Ser-705 each carry the phosphoserine modification. The segment at 655–847 (LGLGRDLQPP…QAPWVPEAGP (193 aa)) is disordered. Over residues 676–694 (TTPPTPTPAPCPTEPPPSP) the composition is skewed to pro residues. Thr-708 is subject to Phosphothreonine. Residues Ser-724, Ser-727, Ser-740, Ser-748, Ser-758, Ser-770, Ser-789, Ser-793, and Ser-815 each carry the phosphoserine modification. Residues 760–773 (PLGLISRPRPSPLR) are compositionally biased toward low complexity. Residues 787 to 799 (RPSPLPSPQPAPR) are compositionally biased toward pro residues. Positions 800–816 (RAPWTLFPDSDPFWDSP) are enriched in low complexity.

Belongs to the protein kinase superfamily. STE Ser/Thr protein kinase family. MAP kinase kinase kinase subfamily. In terms of assembly, homodimer; undergoes dimerization during activation. Interacts with MAP2K4/MKK4. Interacts with MAP2K7/MKK7. Found in a complex with SH3RF1, RAC1, MAP2K7/MKK7, MAPK8IP1/JIP1 and MAPK8/JNK1. Requires Mg(2+) as cofactor. In terms of processing, autophosphorylation on serine and threonine residues within the activation loop plays a role in enzyme activation. Thr-277 is likely to be the main autophosphorylation site. Phosphorylation of Ser-555 and Ser-556 is induced by CDC42. As to expression, expressed in a wide variety of normal and neoplastic tissues including fetal lung, liver, heart and kidney, and adult lung, liver, heart, kidney, placenta, skeletal muscle, pancreas and brain.

Its subcellular location is the cytoplasm. It is found in the cytoskeleton. The protein resides in the microtubule organizing center. It localises to the centrosome. It catalyses the reaction L-seryl-[protein] + ATP = O-phospho-L-seryl-[protein] + ADP + H(+). It carries out the reaction L-threonyl-[protein] + ATP = O-phospho-L-threonyl-[protein] + ADP + H(+). Homodimerization via the leucine zipper domains is required for autophosphorylation and subsequent activation. Its function is as follows. Activates the JUN N-terminal pathway. Required for serum-stimulated cell proliferation and for mitogen and cytokine activation of MAPK14 (p38), MAPK3 (ERK) and MAPK8 (JNK1) through phosphorylation and activation of MAP2K4/MKK4 and MAP2K7/MKK7. Plays a role in mitogen-stimulated phosphorylation and activation of BRAF, but does not phosphorylate BRAF directly. Influences microtubule organization during the cell cycle. The protein is Mitogen-activated protein kinase kinase kinase 11 of Homo sapiens (Human).